The chain runs to 160 residues: Eukaryotic translation initiation factor 5A (160 aa).

Positions 1–10 (MSDDDHHFES) are enriched in basic and acidic residues. Residues 1–23 (MSDDDHHFESSADAGASKTYPQQ) form a disordered region. A Hypusine modification is found at K52.

The protein belongs to the eIF-5A family. Post-translationally, lys-52 undergoes hypusination, a unique post-translational modification that consists in the addition of a butylamino group from spermidine to lysine side chain, leading to the formation of the unusual amino acid hypusine. eIF-5As are the only known proteins to undergo this modification, which is essential for their function.

Its function is as follows. Translation factor that promotes translation elongation and termination, particularly upon ribosome stalling at specific amino acid sequence contexts. Binds between the exit (E) and peptidyl (P) site of the ribosome and promotes rescue of stalled ribosome: specifically required for efficient translation of polyproline-containing peptides as well as other motifs that stall the ribosome. Acts as a ribosome quality control (RQC) cofactor by joining the RQC complex to facilitate peptidyl transfer during CAT tailing step. The protein is Eukaryotic translation initiation factor 5A of Dianthus caryophyllus (Carnation).